A 402-amino-acid polypeptide reads, in one-letter code: 8-amino-7-oxononanoate synthase (402 aa).

Arg-26 contributes to the substrate binding site. 114–115 (GY) is a binding site for pyridoxal 5'-phosphate. Position 139 (His-139) interacts with substrate. Positions 182, 210, and 239 each coordinate pyridoxal 5'-phosphate. Residue Lys-242 is modified to N6-(pyridoxal phosphate)lysine. Residue Thr-359 coordinates substrate.

This sequence belongs to the class-II pyridoxal-phosphate-dependent aminotransferase family. BioF subfamily. In terms of assembly, homodimer. The cofactor is pyridoxal 5'-phosphate.

The enzyme catalyses 6-carboxyhexanoyl-[ACP] + L-alanine + H(+) = (8S)-8-amino-7-oxononanoate + holo-[ACP] + CO2. Its pathway is cofactor biosynthesis; biotin biosynthesis. Its function is as follows. Catalyzes the decarboxylative condensation of pimeloyl-[acyl-carrier protein] and L-alanine to produce 8-amino-7-oxononanoate (AON), [acyl-carrier protein], and carbon dioxide. The sequence is that of 8-amino-7-oxononanoate synthase from Halorhodospira halophila (strain DSM 244 / SL1) (Ectothiorhodospira halophila (strain DSM 244 / SL1)).